The following is a 471-amino-acid chain: Trigger factor (471 aa).

The region spanning 169-264 (GDVAVVDFKG…LKEIKEKELP (96 aa)) is the PPIase FKBP-type domain.

Belongs to the FKBP-type PPIase family. Tig subfamily.

It is found in the cytoplasm. It carries out the reaction [protein]-peptidylproline (omega=180) = [protein]-peptidylproline (omega=0). Functionally, involved in protein export. Acts as a chaperone by maintaining the newly synthesized protein in an open conformation. Functions as a peptidyl-prolyl cis-trans isomerase. The chain is Trigger factor from Nostoc sp. (strain PCC 7120 / SAG 25.82 / UTEX 2576).